Here is a 92-residue protein sequence, read N- to C-terminus: MGLKEDFEEHAEKVKKLTASPSNEDLLILYGLYKQATVGPVTTSRPGMFSMKERAKWDAWKAVEGKSTDEAMSDYITKVKQLLEAEASSASA.

Residues 3–88 (LKEDFEEHAE…VKQLLEAEAS (86 aa)) enclose the ACB domain. An acyl-CoA-binding positions include 30–34 (YGLYK), Lys-56, and Tyr-75.

This sequence belongs to the ACBP family.

Its function is as follows. Binds medium- and long-chain acyl-CoA esters with very high affinity and may function as an intracellular carrier of acyl-CoA esters. In Brassica napus (Rape), this protein is Acyl-CoA-binding protein.